A 977-amino-acid chain; its full sequence is 2-oxoglutarate dehydrogenase E1 component (977 aa).

The RPE1 insert domain maps to Val-77–Gly-125.

The protein belongs to the alpha-ketoglutarate dehydrogenase family. In terms of assembly, homodimer. Part of the 2-oxoglutarate dehydrogenase (OGDH) complex composed of E1 (2-oxoglutarate dehydrogenase), E2 (dihydrolipoamide succinyltransferase) and E3 (dihydrolipoamide dehydrogenase); the complex contains multiple copies of the three enzymatic components (E1, E2 and E3). Thiamine diphosphate serves as cofactor.

It carries out the reaction N(6)-[(R)-lipoyl]-L-lysyl-[protein] + 2-oxoglutarate + H(+) = N(6)-[(R)-S(8)-succinyldihydrolipoyl]-L-lysyl-[protein] + CO2. Its function is as follows. E1 component of the 2-oxoglutarate dehydrogenase (OGDH) complex which catalyzes the decarboxylation of 2-oxoglutarate, the first step in the conversion of 2-oxoglutarate to succinyl-CoA and CO(2). This is 2-oxoglutarate dehydrogenase E1 component (sucA) from Rickettsia felis (strain ATCC VR-1525 / URRWXCal2) (Rickettsia azadi).